We begin with the raw amino-acid sequence, 338 residues long: CRISPR-associated endonuclease Cas1 (338 aa).

Residues E165, H230, and E245 each coordinate Mn(2+).

The protein belongs to the CRISPR-associated endonuclease Cas1 family. As to quaternary structure, homodimer, forms a heterotetramer with a Cas2 homodimer. Requires Mg(2+) as cofactor. Mn(2+) serves as cofactor.

Functionally, CRISPR (clustered regularly interspaced short palindromic repeat), is an adaptive immune system that provides protection against mobile genetic elements (viruses, transposable elements and conjugative plasmids). CRISPR clusters contain spacers, sequences complementary to antecedent mobile elements, and target invading nucleic acids. CRISPR clusters are transcribed and processed into CRISPR RNA (crRNA). Acts as a dsDNA endonuclease. Involved in the integration of spacer DNA into the CRISPR cassette. In Fusobacterium nucleatum subsp. nucleatum (strain ATCC 25586 / DSM 15643 / BCRC 10681 / CIP 101130 / JCM 8532 / KCTC 2640 / LMG 13131 / VPI 4355), this protein is CRISPR-associated endonuclease Cas1.